A 393-amino-acid chain; its full sequence is Chalcone synthase DII (393 aa).

Cysteine 164 is a catalytic residue.

The protein belongs to the thiolase-like superfamily. Chalcone/stilbene synthases family.

It carries out the reaction (E)-4-coumaroyl-CoA + 3 malonyl-CoA + 3 H(+) = 2',4,4',6'-tetrahydroxychalcone + 3 CO2 + 4 CoA. The protein operates within secondary metabolite biosynthesis; flavonoid biosynthesis. In terms of biological role, the primary product of this enzyme is 4,2',4',6'-tetrahydroxychalcone (also termed naringenin-chalcone or chalcone) which can under specific conditions spontaneously isomerize into naringenin. This chain is Chalcone synthase DII (CHS-DII), found in Ipomoea batatas (Sweet potato).